Reading from the N-terminus, the 280-residue chain is Pantothenate synthetase (280 aa).

Position 31-38 (31-38) interacts with ATP; the sequence is MGNLHVGH. Catalysis depends on H38, which acts as the Proton donor. Residue Q62 coordinates (R)-pantoate. Q62 provides a ligand contact to beta-alanine. 150–153 serves as a coordination point for ATP; it reads GKKD. Q156 provides a ligand contact to (R)-pantoate. Residues V179 and 187–190 each bind ATP; that span reads MSSR.

Belongs to the pantothenate synthetase family. In terms of assembly, homodimer.

It localises to the cytoplasm. The catalysed reaction is (R)-pantoate + beta-alanine + ATP = (R)-pantothenate + AMP + diphosphate + H(+). It participates in cofactor biosynthesis; (R)-pantothenate biosynthesis; (R)-pantothenate from (R)-pantoate and beta-alanine: step 1/1. Catalyzes the condensation of pantoate with beta-alanine in an ATP-dependent reaction via a pantoyl-adenylate intermediate. The polypeptide is Pantothenate synthetase (Xanthomonas oryzae pv. oryzae (strain KACC10331 / KXO85)).